The chain runs to 665 residues: DNA ligase (665 aa).

Residues 32–36, 81–82, and Glu-110 each bind NAD(+); these read DSEYD and SL. Residue Lys-112 is the N6-AMP-lysine intermediate of the active site. Positions 133, 167, 283, and 307 each coordinate NAD(+). Zn(2+)-binding residues include Cys-401, Cys-404, Cys-419, and Cys-424. The region spanning 586–665 is the BRCT domain; it reads EGHPDFSGKT…AAFIEKQNGI (80 aa).

This sequence belongs to the NAD-dependent DNA ligase family. LigA subfamily. Mg(2+) serves as cofactor. The cofactor is Mn(2+).

It catalyses the reaction NAD(+) + (deoxyribonucleotide)n-3'-hydroxyl + 5'-phospho-(deoxyribonucleotide)m = (deoxyribonucleotide)n+m + AMP + beta-nicotinamide D-nucleotide.. Functionally, DNA ligase that catalyzes the formation of phosphodiester linkages between 5'-phosphoryl and 3'-hydroxyl groups in double-stranded DNA using NAD as a coenzyme and as the energy source for the reaction. It is essential for DNA replication and repair of damaged DNA. This is DNA ligase from Staphylococcus epidermidis (strain ATCC 35984 / DSM 28319 / BCRC 17069 / CCUG 31568 / BM 3577 / RP62A).